We begin with the raw amino-acid sequence, 148 residues long: uncharacterized protein (148 aa).

The first 16 residues, 1 to 16 (MDVLFIALLVAPLILG), serve as a signal peptide directing secretion. A glycan (N-linked (GlcNAc...) asparagine) is linked at Asn50. Residues 91-125 (MDPQNPVTTKPVTTEPVTTEPVTTEPQSPNQNDAM) form a disordered region. Residues 96 to 116 (PVTTKPVTTEPVTTEPVTTEP) are compositionally biased toward low complexity.

It is found in the secreted. This is an uncharacterized protein from Mus musculus (Mouse).